We begin with the raw amino-acid sequence, 91 residues long: Small nuclear ribonucleoprotein F (91 aa).

Residues 8–81 form the Sm domain; the sequence is APKPFLYDLK…VLFVRGIDDE (74 aa).

It belongs to the snRNP Sm proteins family. SmF/LSm6 subfamily. In terms of assembly, core component of the spliceosomal U1, U2, U4 and U5 small nuclear ribonucleoproteins (snRNPs), the building blocks of the spliceosome. Most spliceosomal snRNPs contain a common set of Sm proteins, SNRPB, SNRPD1, SNRPD2, SNRPD3, SNRPE, SNRPF and SNRPG that assemble in a heptameric protein ring on the Sm site of the small nuclear RNA to form the core snRNP. Component of the U1 snRNP. Component of the U4/U6-U5 tri-snRNP complex. Component of the U7 snRNP complex. Component of the U11/U12 snRNPs that are part of the U12-type spliceosome. Part of the SMN-Sm complex that catalyzes core snRNPs assembly.

The protein resides in the cytoplasm. It localises to the cytosol. The protein localises to the nucleus. In terms of biological role, plays a role in pre-mRNA splicing as a core component of the spliceosomal U1, U2, U4 and U5 small nuclear ribonucleoproteins (snRNPs), the building blocks of the spliceosome. Component of both the pre-catalytic spliceosome B complex and activated spliceosome C complexes. Is also a component of the minor U12 spliceosome. This is Small nuclear ribonucleoprotein F (snrpf) from Dictyostelium discoideum (Social amoeba).